A 174-amino-acid chain; its full sequence is RNA pyrophosphohydrolase (174 aa).

Residues 6-149 (GFRANVGIII…KRDVYRKVMK (144 aa)) enclose the Nudix hydrolase domain. Residues 38–59 (GGVDDGETAEEAMYRELYEEVG) carry the Nudix box motif.

It belongs to the Nudix hydrolase family. RppH subfamily. A divalent metal cation serves as cofactor.

Functionally, accelerates the degradation of transcripts by removing pyrophosphate from the 5'-end of triphosphorylated RNA, leading to a more labile monophosphorylated state that can stimulate subsequent ribonuclease cleavage. The sequence is that of RNA pyrophosphohydrolase from Shewanella sp. (strain MR-7).